A 442-amino-acid polypeptide reads, in one-letter code: tRNA modification GTPase MnmE (442 aa).

Residues R24, E82, and K120 each coordinate (6S)-5-formyl-5,6,7,8-tetrahydrofolate. Positions 217–367 (GLHIVITGEP…LISLIKEKAE (151 aa)) constitute a TrmE-type G domain. GTP-binding positions include 227–232 (NVGKST), 246–252 (SEYAGTT), and 271–274 (DTAG). The Mg(2+) site is built by S231 and T252. K442 serves as a coordination point for (6S)-5-formyl-5,6,7,8-tetrahydrofolate.

It belongs to the TRAFAC class TrmE-Era-EngA-EngB-Septin-like GTPase superfamily. TrmE GTPase family. In terms of assembly, homodimer. Heterotetramer of two MnmE and two MnmG subunits. It depends on K(+) as a cofactor.

It is found in the cytoplasm. Functionally, exhibits a very high intrinsic GTPase hydrolysis rate. Involved in the addition of a carboxymethylaminomethyl (cmnm) group at the wobble position (U34) of certain tRNAs, forming tRNA-cmnm(5)s(2)U34. This chain is tRNA modification GTPase MnmE, found in Wolbachia sp. subsp. Drosophila simulans (strain wRi).